Here is a 303-residue protein sequence, read N- to C-terminus: Sporulation regulatory protein (303 aa).

One can recognise a FtsK domain in the interval 26 to 213 (TGRLRAGLRK…HRVNDKQTAE (188 aa)). 43 to 50 (GANHSGKS) contributes to the ATP binding site.

Its function is as follows. Involved in sporulation inhibition and pock formation. The chain is Sporulation regulatory protein (spi) from Streptomyces azureus.